The following is a 61-amino-acid chain: Small ribosomal subunit protein uS14B (61 aa).

4 residues coordinate Zn(2+): C24, C27, C40, and C43.

The protein belongs to the universal ribosomal protein uS14 family. Zinc-binding uS14 subfamily. As to quaternary structure, part of the 30S ribosomal subunit. Contacts proteins S3 and S10. Zn(2+) serves as cofactor.

In terms of biological role, binds 16S rRNA, required for the assembly of 30S particles and may also be responsible for determining the conformation of the 16S rRNA at the A site. The sequence is that of Small ribosomal subunit protein uS14B from Shouchella clausii (strain KSM-K16) (Alkalihalobacillus clausii).